The primary structure comprises 398 residues: Bifunctional enzyme IspD/IspF (398 aa).

A 2-C-methyl-D-erythritol 4-phosphate cytidylyltransferase region spans residues 1-234 (MANSRRTAAI…SRLAALLGDI (234 aa)). Positions 235 to 398 (RTGTGYDVHA…LPWGPNGLSG (164 aa)) are 2-C-methyl-D-erythritol 2,4-cyclodiphosphate synthase. The a divalent metal cation site is built by Asp-241 and His-243. 4-CDP-2-C-methyl-D-erythritol 2-phosphate contacts are provided by residues 241-243 (DVH) and 267-268 (HS). An a divalent metal cation-binding site is contributed by His-275. 4-CDP-2-C-methyl-D-erythritol 2-phosphate-binding positions include 289–291 (DIG), 365–368 (TTSE), Phe-372, and Arg-375.

In the N-terminal section; belongs to the IspD/TarI cytidylyltransferase family. IspD subfamily. This sequence in the C-terminal section; belongs to the IspF family. A divalent metal cation serves as cofactor.

The catalysed reaction is 2-C-methyl-D-erythritol 4-phosphate + CTP + H(+) = 4-CDP-2-C-methyl-D-erythritol + diphosphate. It catalyses the reaction 4-CDP-2-C-methyl-D-erythritol 2-phosphate = 2-C-methyl-D-erythritol 2,4-cyclic diphosphate + CMP. It functions in the pathway isoprenoid biosynthesis; isopentenyl diphosphate biosynthesis via DXP pathway; isopentenyl diphosphate from 1-deoxy-D-xylulose 5-phosphate: step 2/6. It participates in isoprenoid biosynthesis; isopentenyl diphosphate biosynthesis via DXP pathway; isopentenyl diphosphate from 1-deoxy-D-xylulose 5-phosphate: step 4/6. In terms of biological role, bifunctional enzyme that catalyzes the formation of 4-diphosphocytidyl-2-C-methyl-D-erythritol from CTP and 2-C-methyl-D-erythritol 4-phosphate (MEP) (IspD), and catalyzes the conversion of 4-diphosphocytidyl-2-C-methyl-D-erythritol 2-phosphate (CDP-ME2P) to 2-C-methyl-D-erythritol 2,4-cyclodiphosphate (ME-CPP) with a corresponding release of cytidine 5-monophosphate (CMP) (IspF). The chain is Bifunctional enzyme IspD/IspF from Rhodopseudomonas palustris (strain BisA53).